We begin with the raw amino-acid sequence, 421 residues long: Tubulin gamma-3 chain (421 aa).

A GTP-binding site is contributed by 94-100 (AGGTGSG).

This sequence belongs to the tubulin family.

The protein localises to the cytoplasm. The protein resides in the cytoskeleton. It localises to the microtubule organizing center. In terms of biological role, tubulin is the major constituent of microtubules. The gamma chain is found at microtubule organizing centers (MTOC) such as the spindle poles, suggesting that it is involved in the minus-end nucleation of microtubule assembly. This chain is Tubulin gamma-3 chain (TUBG3), found in Zea mays (Maize).